Here is a 92-residue protein sequence, read N- to C-terminus: Small ribosomal subunit protein uS19 (92 aa).

This sequence belongs to the universal ribosomal protein uS19 family.

Functionally, protein S19 forms a complex with S13 that binds strongly to the 16S ribosomal RNA. In Gloeothece citriformis (strain PCC 7424) (Cyanothece sp. (strain PCC 7424)), this protein is Small ribosomal subunit protein uS19.